The primary structure comprises 410 residues: Protein TIC 214 (410 aa).

6 helical membrane-spanning segments follow: residues 22–42 (FVFG…GSFI), 61–81 (GSAI…IGVI), 87–107 (LEPS…IGFL), 131–151 (AVIV…ITSI), 161–181 (LFLF…GFLI), and 210–230 (LALC…YIGL).

This sequence belongs to the TIC214 family. In terms of assembly, part of the Tic complex.

It localises to the plastid. It is found in the chloroplast inner membrane. Its function is as follows. Involved in protein precursor import into chloroplasts. May be part of an intermediate translocation complex acting as a protein-conducting channel at the inner envelope. The polypeptide is Protein TIC 214 (Mesostigma viride (Green alga)).